Consider the following 90-residue polypeptide: MARTVNCIKLGREAEGLDFPPYPGPLGQRIFEHVSKEAWQQWIKMQTMIINENRLNLVDAKHRKYLAEQVEKHFFGEGADQIQGYVPPAA.

It belongs to the Fe(2+)-trafficking protein family.

Its function is as follows. Could be a mediator in iron transactions between iron acquisition and iron-requiring processes, such as synthesis and/or repair of Fe-S clusters in biosynthetic enzymes. The chain is Probable Fe(2+)-trafficking protein from Dechloromonas aromatica (strain RCB).